The sequence spans 299 residues: Bifunctional protein FolD (299 aa).

NADP(+) is bound by residues 168 to 170 (GRS), Ser-193, and Ile-234.

It belongs to the tetrahydrofolate dehydrogenase/cyclohydrolase family. As to quaternary structure, homodimer.

It catalyses the reaction (6R)-5,10-methylene-5,6,7,8-tetrahydrofolate + NADP(+) = (6R)-5,10-methenyltetrahydrofolate + NADPH. The enzyme catalyses (6R)-5,10-methenyltetrahydrofolate + H2O = (6R)-10-formyltetrahydrofolate + H(+). It participates in one-carbon metabolism; tetrahydrofolate interconversion. Its function is as follows. Catalyzes the oxidation of 5,10-methylenetetrahydrofolate to 5,10-methenyltetrahydrofolate and then the hydrolysis of 5,10-methenyltetrahydrofolate to 10-formyltetrahydrofolate. The chain is Bifunctional protein FolD from Agrobacterium fabrum (strain C58 / ATCC 33970) (Agrobacterium tumefaciens (strain C58)).